The chain runs to 1130 residues: Integrin alpha-6 (1130 aa).

Positions 1 to 23 (MAAAGQLCLLYLSAGLLSRLGAA) are cleaved as a signal peptide. Residues 24–1050 (FNLDTREDNV…FPSKTVAQYS (1027 aa)) are Extracellular-facing. FG-GAP repeat units follow at residues 30–95 (EDNV…GPCT), 101–166 (NDAD…IEDD), 176–229 (DGRL…FFDM), 283–339 (EQPD…KSAH), 340–402 (LLPE…RWNN), 403–458 (VKPI…GINT), and 459–518 (KPTQ…VTPN). A glycan (N-linked (GlcNAc...) asparagine) is linked at Asn78. 3 disulfides stabilise this stretch: Cys86/Cys94, Cys131/Cys154, and Cys175/Cys188. N-linked (GlcNAc...) asparagine glycosylation is found at Asn223 and Asn323. 4 residues coordinate Ca(2+): Asp363, Asn365, Asp367, and Asp371. An N-linked (GlcNAc...) asparagine glycan is attached at Asn409. Positions 425, 427, 429, 431, 433, 480, 482, 484, 486, and 488 each coordinate Ca(2+). Cystine bridges form between Cys528/Cys535, Cys541/Cys601, Cys665/Cys671, and Cys765/Cys776. 4 N-linked (GlcNAc...) asparagine glycosylation sites follow: Asn770, Asn787, Asn930, and Asn966. Disulfide bonds link Cys920–Cys967 and Cys973–Cys978. Asn997 carries an N-linked (GlcNAc...) asparagine glycan. Residues 1051–1076 (GVPWWIILVAILAGILMLALLVFILW) form a helical membrane-spanning segment. 2 positions are modified to phosphoserine: Val1059 and Gly1064. Residues 1077 to 1083 (KCGFFKR) are interaction with HPS5. Residues 1077-1130 (KCGFFKRSRYDDSVPRYHAVRIRKEEREIKDEKYIDNLEKKQWITKWNENESYS) lie on the Cytoplasmic side of the membrane. The S-palmitoyl cysteine; by DHHC3 moiety is linked to residue Cys1078. The GFFKR motif signature appears at 1079-1083 (GFFKR). Arg1103 bears the Phosphoserine mark.

Belongs to the integrin alpha chain family. In terms of assembly, heterodimer of an alpha and a beta subunit. The alpha subunit is composed of a heavy and a light chain linked by a disulfide bond. Alpha-6 associates with either beta-1 (ITGB1) or beta-4 (ITGB4) to form ITGA6:ITGB1 and ITGA6:ITGB4, respectively. ITGA6:ITGB1 is found in a complex with CD9; interaction takes place in oocytes and is involved in sperm-egg fusion. ITGA6:ITGB4 is found in a ternary complex with NRG1 and ERBB3. ITGA6:ITGB4 is found in a ternary complex with IGF1 and IGF1R. ITGA6:ITGB4 interacts with IGF2. Interacts with ADAM9. Interacts with RAB21. Interacts with MDK. ITGA6:ITGB1 interacts with MDK; this interaction mediates MDK-induced neurite outgrowth. Interacts with CD82; this interaction down-regulates ITGA6-mediated cell adhesion. In terms of processing, isoforms containing segment A, but not segment B, are the major targets for PMA-induced phosphorylation. Phosphorylation occurs on 'Ser-1103' of isoform alpha-6X1X2A. Phosphorylation is not required for the induction of integrin alpha-6A/beta-1 high affinity but may reduce the affinity for ligand. Undergoes PLAU-mediated cleavage at residues Arg-634-635-Arg in a time-dependent manner to produce processed integrin alpha-6 (alpha6p). Production of alpha6p enhances prostate cancer cell invasion and migration. Post-translationally, palmitoylation by DHHC3 enhances stability and cell surface expression. As to expression, integrin alpha-6/beta-4 is predominantly expressed by epithelia. Isoforms containing segment X1 are ubiquitously expressed. Isoforms containing segment X1X2 are expressed in heart, kidney, placenta, colon, duodenum, myoblasts and myotubes, and in a limited number of cell lines; they are always coexpressed with the ubiquitous isoform containing segment X1. In some tissues (e.g. Salivary gland), isoforms containing cytoplasmic segment A and isoforms containing segment B are detected while in others, only isoforms containing one cytoplasmic segment are found (segment A in epidermis and segment B in kidney). Processed integrin alpha-6: Expressed at low levels in normal prostate tissue with elevated levels in prostate cancer tissue (at protein level).

Its subcellular location is the cell membrane. In terms of biological role, integrin alpha-6/beta-1 (ITGA6:ITGB1) is a receptor for laminin on platelets. Integrin alpha-6/beta-1 (ITGA6:ITGB1) is present in oocytes and is involved in sperm-egg fusion. Integrin alpha-6/beta-4 (ITGA6:ITGB4) is a receptor for laminin in epithelial cells and it plays a critical structural role in the hemidesmosome. ITGA6:ITGB4 binds to NRG1 (via EGF domain) and this binding is essential for NRG1-ERBB signaling. ITGA6:ITGB4 binds to IGF1 and this binding is essential for IGF1 signaling. ITGA6:ITGB4 binds to IGF2 and this binding is essential for IGF2 signaling. The polypeptide is Integrin alpha-6 (ITGA6) (Homo sapiens (Human)).